Here is a 798-residue protein sequence, read N- to C-terminus: Nuclear cap-binding protein subunit 1 (798 aa).

Residues 28–241 form the MIF4G domain; the sequence is EKKLQGVIGK…SLSAQIEALR (214 aa). The disordered stretch occupies residues 663–686; the sequence is NKIKEEDDEESDIKMDEDETKEEK. Positions 668–682 are enriched in acidic residues; the sequence is EDDEESDIKMDEDET.

The protein belongs to the NCBP1 family. In terms of assembly, component of the nuclear cap-binding complex (CBC), a heterodimer composed of ncbp-1 and ncbp-1 that interacts with m7GpppG-capped RNA.

The protein resides in the nucleus. Functionally, component of the cap-binding complex (CBC), which binds cotranscriptionally to the 5'-cap of pre-mRNAs and is involved in various processes such as pre-mRNA splicing and RNA-mediated gene silencing (RNAi). The CBC complex is involved in miRNA-mediated RNA interference and is required for primary microRNAs (miRNAs) processing. In the CBC complex, ncbp-1 does not bind directly capped RNAs (m7GpppG-capped RNA) but is required to stabilize the movement of the N-terminal loop of ncbp-2 and lock the CBC into a high affinity cap-binding state with the cap structure. The polypeptide is Nuclear cap-binding protein subunit 1 (ncbp-1) (Caenorhabditis elegans).